Reading from the N-terminus, the 407-residue chain is Cell division control protein 12 (407 aa).

At S2 the chain carries N-acetylserine. In terms of domain architecture, Septin-type G spans 31–314 (EGGTFTVMLC…ETYRRLRLEG (284 aa)). Residues 41-48 (GESGLGKT) are G1 motif. Residues 41 to 48 (GESGLGKT), T75, G101, 180 to 188 (KADTLTAQE), G247, and R263 contribute to the GTP site. The tract at residues 98–101 (DTPG) is G3 motif. The interval 179 to 182 (AKAD) is G4 motif. Residues 344 to 406 (EEENALKKYF…KSLQVKKSHL (63 aa)) adopt a coiled-coil conformation.

The protein belongs to the TRAFAC class TrmE-Era-EngA-EngB-Septin-like GTPase superfamily. Septin GTPase family. Component of the septin complex which consists of CDC3, CDC10, CDC11, CDC12 and probably SHS1 and rearranges to a cortical collar of highly ordered filaments at the mother-bud-neck. A complex formed by CDC3, CDC10, CDC11 and CDC12 is capable of forming long filaments in vitro and the components seem to be present in a 2:2:2:2 arrangement in vivo. The filaments are proposed to be formed by the end-to-end polymerization of CDC3-CDC12-CDC11 complexes with CDC10 serving as a bridge to bundle the polymers into paired filaments. Component of the GIN4 complex composed of at least BNI5, CDC3, CDC10, CDC11, CDC12, GIN4, NAP1 and SHS1. Self-associates. Interacts with SYP1.

The protein resides in the membrane. It is found in the bud neck. Septins are GTPases involved in cytokinesis that assemble early in the cell cycle as a patch at the incipient bud site and form a ring approximate 15 minutes before bud emergence, which transforms into an hour-glass shaped collar of cortical filaments that spans both sides of the mother-bud neck. This collar persists until just before cytokinesis, when it splits into two rings that occupy opposite sides of the neck. The septins at the bud neck serve as a structural scaffold that recruits different components involved in diverse processes at specific stages during the cell cycle. Many proteins bind asymmetrically to the septin collar. The septin assembly is regulated by protein kinases GIN4 and/or CLA4. May act by recruiting MYO1 and HOF1, a protein involved in septation, to the site of cleavage. Septins are also involved in cell morphogenesis, bud site selection, chitin deposition, cell cycle regulation, cell compartmentalization and spore wall formation. The sequence is that of Cell division control protein 12 (CDC12) from Saccharomyces cerevisiae (strain ATCC 204508 / S288c) (Baker's yeast).